The primary structure comprises 192 residues: Transmembrane protein 11, mitochondrial (192 aa).

Residues 1 to 20 are disordered; that stretch reads MAAWGRRRLGPGSSGGSARE. A run of 2 helical transmembrane segments spans residues 84-100 and 107-124; these read TAVL…LALP and ISLP…LYGI.

This sequence belongs to the TMEM11 family. In terms of assembly, associates with the mitochondrial contact site and cristae organizing system (MICOS) complex, composed of at least MICOS10/MIC10, CHCHD3/MIC19, CHCHD6/MIC25, APOOL/MIC27, IMMT/MIC60, APOO/MIC23/MIC26 and QIL1/MIC13. This complex was also known under the names MINOS or MitOS complex. The MICOS complex associates with mitochondrial outer membrane proteins SAMM50, MTX1, MTX2 and DNAJC11, mitochondrial inner membrane protein TMEM11 and with HSPA9. Interacts with IMMT/MIC60.

It is found in the mitochondrion inner membrane. Its function is as follows. Plays a role in mitochondrial morphogenesis. In Homo sapiens (Human), this protein is Transmembrane protein 11, mitochondrial (TMEM11).